A 132-amino-acid polypeptide reads, in one-letter code: Small ribosomal subunit protein uS8 (132 aa).

The protein belongs to the universal ribosomal protein uS8 family. Part of the 30S ribosomal subunit. Contacts proteins S5 and S12.

In terms of biological role, one of the primary rRNA binding proteins, it binds directly to 16S rRNA central domain where it helps coordinate assembly of the platform of the 30S subunit. This chain is Small ribosomal subunit protein uS8, found in Roseiflexus castenholzii (strain DSM 13941 / HLO8).